The following is a 516-amino-acid chain: Na(+)/H(+) antiporter NhaB (516 aa).

Helical transmembrane passes span 23–43 (LALI…PFVA), 61–80 (CYPL…IGMT), 97–117 (LLLI…LFVF), 120–140 (LLLG…AAAF), 144–164 (FLDA…FYGI), 202–222 (LMMH…VGEP), 238–258 (FFIR…LTCL), 303–323 (AVIG…VGLI), 348–368 (TEAL…AVII), 391–411 (LFYL…VGTV), 447–467 (ATPN…APLI), and 475–495 (VWMA…CVEF).

Belongs to the NhaB Na(+)/H(+) (TC 2.A.34) antiporter family.

It is found in the cell inner membrane. It catalyses the reaction 2 Na(+)(in) + 3 H(+)(out) = 2 Na(+)(out) + 3 H(+)(in). Na(+)/H(+) antiporter that extrudes sodium in exchange for external protons. The protein is Na(+)/H(+) antiporter NhaB of Klebsiella pneumoniae (strain 342).